The primary structure comprises 155 residues: Putative pre-16S rRNA nuclease (155 aa).

It belongs to the YqgF nuclease family.

Its subcellular location is the cytoplasm. Functionally, could be a nuclease involved in processing of the 5'-end of pre-16S rRNA. This chain is Putative pre-16S rRNA nuclease, found in Xanthomonas campestris pv. campestris (strain B100).